Reading from the N-terminus, the 223-residue chain is Protein UGX2 (223 aa).

Over residues 78 to 95 (SNKRAKMKSKTKLTRTAK) the composition is skewed to basic residues. The disordered stretch occupies residues 78 to 117 (SNKRAKMKSKTKLTRTAKQRRESPVCERDESDEDNDSDHY). Residues 96 to 105 (QRRESPVCER) show a composition bias toward basic and acidic residues.

The protein is Protein UGX2 (UGX2) of Saccharomyces cerevisiae (strain ATCC 204508 / S288c) (Baker's yeast).